Reading from the N-terminus, the 184-residue chain is Large ribosomal subunit protein uL6 (184 aa).

This sequence belongs to the universal ribosomal protein uL6 family. As to quaternary structure, part of the 50S ribosomal subunit.

Its function is as follows. This protein binds to the 23S rRNA, and is important in its secondary structure. It is located near the subunit interface in the base of the L7/L12 stalk, and near the tRNA binding site of the peptidyltransferase center. This Thermotoga neapolitana (strain ATCC 49049 / DSM 4359 / NBRC 107923 / NS-E) protein is Large ribosomal subunit protein uL6.